The chain runs to 798 residues: Phenylalanine--tRNA ligase beta subunit (798 aa).

Residues 38–148 (IGNYEKVVVG…PEAPVGEKIE (111 aa)) enclose the tRNA-binding domain. The 76-residue stretch at 400–475 (FTPKVIAVSL…RYLGYNNFPD (76 aa)) folds into the B5 domain. Residues Asp453, Asp459, Glu462, and Glu463 each coordinate Mg(2+). Residues 703–796 (SPYPEVKRDI…LEAKTGAKLR (94 aa)) form the FDX-ACB domain.

The protein belongs to the phenylalanyl-tRNA synthetase beta subunit family. Type 1 subfamily. As to quaternary structure, tetramer of two alpha and two beta subunits. It depends on Mg(2+) as a cofactor.

It localises to the cytoplasm. The enzyme catalyses tRNA(Phe) + L-phenylalanine + ATP = L-phenylalanyl-tRNA(Phe) + AMP + diphosphate + H(+). The sequence is that of Phenylalanine--tRNA ligase beta subunit from Carboxydothermus hydrogenoformans (strain ATCC BAA-161 / DSM 6008 / Z-2901).